A 563-amino-acid polypeptide reads, in one-letter code: Coiled-coil domain-containing protein 38 (563 aa).

3 coiled-coil regions span residues 129–212 (KRNT…KTEF), 384–415 (NIEF…RSRL), and 485–522 (ERMK…AVAQ). Positions 521 to 550 (AQPKKKLGRRLVYHSKPPSANKQQLPLVNE) are disordered. Residues 523–533 (PKKKLGRRLVY) are compositionally biased toward basic residues.

Interacts with CCDC42, CFAP53, IFT88 and ODF2. Interacts with CCDC146. Interacts with TEKT3. Interacts with ubiquitinated histone H2A.

The protein localises to the cytoplasm. It localises to the cytoskeleton. Its subcellular location is the microtubule organizing center. It is found in the centrosome. The protein resides in the perinuclear region. The protein localises to the cell projection. It localises to the cilium. Its subcellular location is the flagellum. Essential for male fertility. Required for sperm flagellum biogenesis. Also required for acrosome biogenesis. Required for the attachment of developing acrosomes to the nucleus during spermiogenesis and may be involved in the transport of fibrous sheath components. The chain is Coiled-coil domain-containing protein 38 (CCDC38) from Macaca fascicularis (Crab-eating macaque).